The following is a 314-amino-acid chain: 4-hydroxy-3-methylbut-2-enyl diphosphate reductase (314 aa).

Residue Cys12 participates in [4Fe-4S] cluster binding. Residues His41 and His74 each contribute to the (2E)-4-hydroxy-3-methylbut-2-enyl diphosphate site. His41 and His74 together coordinate dimethylallyl diphosphate. 2 residues coordinate isopentenyl diphosphate: His41 and His74. Cys96 is a [4Fe-4S] cluster binding site. (2E)-4-hydroxy-3-methylbut-2-enyl diphosphate is bound at residue His124. His124 is a dimethylallyl diphosphate binding site. His124 contacts isopentenyl diphosphate. Residue Glu126 is the Proton donor of the active site. Position 167 (Thr167) interacts with (2E)-4-hydroxy-3-methylbut-2-enyl diphosphate. Position 197 (Cys197) interacts with [4Fe-4S] cluster. Residues Ser225, Ser226, Asn227, and Ser269 each coordinate (2E)-4-hydroxy-3-methylbut-2-enyl diphosphate. Dimethylallyl diphosphate-binding residues include Ser225, Ser226, Asn227, and Ser269. Isopentenyl diphosphate is bound by residues Ser225, Ser226, Asn227, and Ser269.

Belongs to the IspH family. It depends on [4Fe-4S] cluster as a cofactor.

The enzyme catalyses isopentenyl diphosphate + 2 oxidized [2Fe-2S]-[ferredoxin] + H2O = (2E)-4-hydroxy-3-methylbut-2-enyl diphosphate + 2 reduced [2Fe-2S]-[ferredoxin] + 2 H(+). It catalyses the reaction dimethylallyl diphosphate + 2 oxidized [2Fe-2S]-[ferredoxin] + H2O = (2E)-4-hydroxy-3-methylbut-2-enyl diphosphate + 2 reduced [2Fe-2S]-[ferredoxin] + 2 H(+). Its pathway is isoprenoid biosynthesis; dimethylallyl diphosphate biosynthesis; dimethylallyl diphosphate from (2E)-4-hydroxy-3-methylbutenyl diphosphate: step 1/1. The protein operates within isoprenoid biosynthesis; isopentenyl diphosphate biosynthesis via DXP pathway; isopentenyl diphosphate from 1-deoxy-D-xylulose 5-phosphate: step 6/6. Functionally, catalyzes the conversion of 1-hydroxy-2-methyl-2-(E)-butenyl 4-diphosphate (HMBPP) into a mixture of isopentenyl diphosphate (IPP) and dimethylallyl diphosphate (DMAPP). Acts in the terminal step of the DOXP/MEP pathway for isoprenoid precursor biosynthesis. The chain is 4-hydroxy-3-methylbut-2-enyl diphosphate reductase from Aliivibrio fischeri (strain ATCC 700601 / ES114) (Vibrio fischeri).